Here is a 410-residue protein sequence, read N- to C-terminus: Probable nicotinate phosphoribosyltransferase (410 aa).

Positions 15, 170, and 220 each coordinate nicotinate. Residue His-223 is modified to Phosphohistidine. Position 348 (Thr-348) interacts with 5-phospho-alpha-D-ribose 1-diphosphate.

This sequence belongs to the NAPRTase family. Mg(2+) is required as a cofactor. It depends on Mn(2+) as a cofactor. Post-translationally, transiently phosphorylated on a His residue during the reaction cycle. Phosphorylation strongly increases the affinity for substrates and increases the rate of nicotinate D-ribonucleotide production. Dephosphorylation regenerates the low-affinity form of the enzyme, leading to product release.

The catalysed reaction is nicotinate + 5-phospho-alpha-D-ribose 1-diphosphate + ATP + H2O = nicotinate beta-D-ribonucleotide + ADP + phosphate + diphosphate. It participates in cofactor biosynthesis; NAD(+) biosynthesis; nicotinate D-ribonucleotide from nicotinate: step 1/1. Its function is as follows. Catalyzes the first step in the biosynthesis of NAD from nicotinic acid, the ATP-dependent synthesis of beta-nicotinate D-ribonucleotide from nicotinate and 5-phospho-D-ribose 1-phosphate. Helps prevent cellular oxidative stress via its role in NAD biosynthesis. The protein is Probable nicotinate phosphoribosyltransferase of Schizosaccharomyces pombe (strain 972 / ATCC 24843) (Fission yeast).